Reading from the N-terminus, the 486-residue chain is tRNA (uracil-5-)-methyltransferase homolog B (486 aa).

Positions 305, 355, and 405 each coordinate S-adenosyl-L-methionine. The active-site Nucleophile is the Cys433. The active-site Proton acceptor is Glu479.

The protein belongs to the class I-like SAM-binding methyltransferase superfamily. RNA M5U methyltransferase family.

The protein localises to the mitochondrion matrix. The enzyme catalyses uridine(54) in tRNA + S-adenosyl-L-methionine = 5-methyluridine(54) in tRNA + S-adenosyl-L-homocysteine + H(+). It catalyses the reaction a uridine in 12S rRNA + S-adenosyl-L-methionine = a 5-methyluridine in 12S rRNA + S-adenosyl-L-homocysteine + H(+). Its function is as follows. Mitochondrial S-adenosyl-L-methionine-dependent methyltransferase that catalyzes the formation of 5-methyl-uridine in tRNAs and 12S rRNA. Catalyzes the methylation of uridine at position 54 (m5U54) in all tRNAs. Specifically methylates the uridine in position 429 of 12S rRNA (m5U429). Does not affect RNA stability or mitochondrial translation. In Pongo abelii (Sumatran orangutan), this protein is tRNA (uracil-5-)-methyltransferase homolog B (TRMT2B).